The chain runs to 198 residues: Molybdenum cofactor guanylyltransferase (198 aa).

GTP contacts are provided by residues 14 to 16 (LAG), lysine 27, aspartate 73, and aspartate 103. Aspartate 103 is a Mg(2+) binding site.

Belongs to the MobA family. Monomer. Mg(2+) is required as a cofactor.

Its subcellular location is the cytoplasm. It catalyses the reaction Mo-molybdopterin + GTP + H(+) = Mo-molybdopterin guanine dinucleotide + diphosphate. Its function is as follows. Transfers a GMP moiety from GTP to Mo-molybdopterin (Mo-MPT) cofactor (Moco or molybdenum cofactor) to form Mo-molybdopterin guanine dinucleotide (Mo-MGD) cofactor. This chain is Molybdenum cofactor guanylyltransferase, found in Pseudomonas paraeruginosa (strain DSM 24068 / PA7) (Pseudomonas aeruginosa (strain PA7)).